The sequence spans 94 residues: ESAT-6-like protein EsxL (94 aa).

Belongs to the WXG100 family. ESAT-6 subfamily. In terms of assembly, strongly interacts with EsxK to form a heterodimeric complex under reducing conditions.

Its subcellular location is the secreted. The protein is ESAT-6-like protein EsxL of Mycobacterium tuberculosis (strain CDC 1551 / Oshkosh).